The sequence spans 323 residues: L-lactate dehydrogenase (323 aa).

Residues valine 11, aspartate 32, and tyrosine 63 each contribute to the NAD(+) site. Residues glutamine 80 and arginine 86 each coordinate substrate. Residues serine 99, valine 116 to asparagine 118, and serine 141 each bind NAD(+). Substrate is bound at residue asparagine 118–aspartate 121. Residue aspartate 146 to arginine 149 coordinates substrate. Positions 151 and 166 each coordinate beta-D-fructose 1,6-bisphosphate. The active-site Proton acceptor is the histidine 173. The residue at position 221 (tyrosine 221) is a Phosphotyrosine. Threonine 230 lines the substrate pocket.

This sequence belongs to the LDH/MDH superfamily. LDH family. As to quaternary structure, homotetramer.

The protein localises to the cytoplasm. It catalyses the reaction (S)-lactate + NAD(+) = pyruvate + NADH + H(+). Its pathway is fermentation; pyruvate fermentation to lactate; (S)-lactate from pyruvate: step 1/1. With respect to regulation, allosterically activated by fructose 1,6-bisphosphate (FBP). Catalyzes the conversion of lactate to pyruvate. This chain is L-lactate dehydrogenase, found in Kosmotoga olearia (strain ATCC BAA-1733 / DSM 21960 / TBF 19.5.1).